A 528-amino-acid polypeptide reads, in one-letter code: Protein arginine N-methyltransferase 3 (528 aa).

Residues 1 to 43 form a disordered region; it reads MCSLAAGNGRGAELGPEPLELSDSGDDAGWEDEDADTEPAHGR. Cysteine 2 carries the post-translational modification N-acetylcysteine. Residues serine 22 and serine 24 each carry the phosphoserine modification. Acidic residues predominate over residues 23–37; the sequence is DSGDDAGWEDEDADT. Residues 46-69 form a C2H2-type zinc finger; that stretch reads TPCLFCDRLFASAEETFSHCKLEH. Position 169 is a phosphoserine (serine 169). The tract at residues 184–528 is mediates interaction with ALDH1A1; the sequence is MKQFAQDFVM…NSSTQTYSLQ (345 aa). Residues 214–528 enclose the SAM-dependent MTase PRMT-type domain; the sequence is DGVYFSSYGH…NSSTQTYSLQ (315 aa). 6 residues coordinate S-adenosyl-L-homocysteine: arginine 236, glycine 260, aspartate 282, serine 284, isoleucine 310, and glutamate 311. Catalysis depends on residues glutamate 326 and glutamate 335.

Belongs to the class I-like SAM-binding methyltransferase superfamily. Protein arginine N-methyltransferase family. Monomer and homodimer. Interacts with EPB41L3 (via FERM domain); the interaction is direct and inhibits the protein-arginine N-methyltransferase activity of PRMT3. Interacts with the 40S ribosomal protein RPS2. Interacts with ALDH1A1; the interaction is direct, inhibits ALDH1A1 aldehyde dehydrogenase activity and is independent of the methyltransferase activity of PRMT3.

The protein localises to the cytoplasm. The protein resides in the cytosol. Its subcellular location is the nucleus. It carries out the reaction L-arginyl-[protein] + S-adenosyl-L-methionine = N(omega)-methyl-L-arginyl-[protein] + S-adenosyl-L-homocysteine + H(+). It catalyses the reaction L-arginyl-[protein] + 2 S-adenosyl-L-methionine = N(omega),N(omega)-dimethyl-L-arginyl-[protein] + 2 S-adenosyl-L-homocysteine + 2 H(+). Its activity is regulated as follows. Inhibited by N-ethylmaleimide and high concentrations of zinc chloride. Its function is as follows. Protein-arginine N-methyltransferase that catalyzes both the monomethylation and asymmetric dimethylation of the guanidino nitrogens of arginine residues in target proteins, and therefore falls into the group of type I methyltransferases. Catalyzes the asymmetric arginine dimethylation at multiple sites in the Arg/Gly-rich region of small ribosomal subunit protein uS5/RPS2. Also appears to methylate other ribosomal proteins. May regulate retinoic acid synthesis and signaling by inhibiting ALDH1A1 retinal dehydrogenase activity. Contributes to methylation of histone H4 'Arg-3', a specific tag for epigenetic transcriptional activation. Promotes osteogenesis. The sequence is that of Protein arginine N-methyltransferase 3 from Mus musculus (Mouse).